A 471-amino-acid polypeptide reads, in one-letter code: Glutamate--tRNA ligase (471 aa).

The short motif at 9–19 is the 'HIGH' region element; that stretch reads PSPTGYLHVGG. Residues C98, C100, C125, and H127 each coordinate Zn(2+). A 'KMSKS' region motif is present at residues 237-241; that stretch reads KLSKR. K240 is a binding site for ATP.

Belongs to the class-I aminoacyl-tRNA synthetase family. Glutamate--tRNA ligase type 1 subfamily. As to quaternary structure, monomer. Zn(2+) is required as a cofactor.

It is found in the cytoplasm. It catalyses the reaction tRNA(Glu) + L-glutamate + ATP = L-glutamyl-tRNA(Glu) + AMP + diphosphate. Functionally, catalyzes the attachment of glutamate to tRNA(Glu) in a two-step reaction: glutamate is first activated by ATP to form Glu-AMP and then transferred to the acceptor end of tRNA(Glu). The polypeptide is Glutamate--tRNA ligase (Shigella sonnei (strain Ss046)).